The primary structure comprises 409 residues: Pyrophosphate--fructose 6-phosphate 1-phosphotransferase (409 aa).

Residue Gly-14 coordinates diphosphate. Mg(2+) is bound at residue Asp-123. Residues 151–153 (TVD), 196–198 (MGR), Glu-268, and 325–328 (YFAR) contribute to the substrate site. The active-site Proton acceptor is the Asp-153.

Belongs to the phosphofructokinase type A (PFKA) family. PPi-dependent PFK group II subfamily. Clade 'P' sub-subfamily. Homodimer. It depends on Mg(2+) as a cofactor.

It is found in the cytoplasm. The catalysed reaction is beta-D-fructose 6-phosphate + diphosphate = beta-D-fructose 1,6-bisphosphate + phosphate + H(+). It functions in the pathway carbohydrate degradation; glycolysis; D-glyceraldehyde 3-phosphate and glycerone phosphate from D-glucose: step 3/4. Non-allosteric. Its function is as follows. Catalyzes the phosphorylation of D-fructose 6-phosphate, the first committing step of glycolysis. Uses inorganic phosphate (PPi) as phosphoryl donor instead of ATP like common ATP-dependent phosphofructokinases (ATP-PFKs), which renders the reaction reversible, and can thus function both in glycolysis and gluconeogenesis. Consistently, PPi-PFK can replace the enzymes of both the forward (ATP-PFK) and reverse (fructose-bisphosphatase (FBPase)) reactions. The protein is Pyrophosphate--fructose 6-phosphate 1-phosphotransferase of Methylomonas methanica.